Reading from the N-terminus, the 116-residue chain is Ribosome-binding factor A (116 aa).

The protein belongs to the RbfA family. In terms of assembly, monomer. Binds 30S ribosomal subunits, but not 50S ribosomal subunits or 70S ribosomes.

The protein resides in the cytoplasm. Functionally, one of several proteins that assist in the late maturation steps of the functional core of the 30S ribosomal subunit. Associates with free 30S ribosomal subunits (but not with 30S subunits that are part of 70S ribosomes or polysomes). Required for efficient processing of 16S rRNA. May interact with the 5'-terminal helix region of 16S rRNA. The polypeptide is Ribosome-binding factor A (Streptococcus sanguinis (strain SK36)).